A 261-amino-acid chain; its full sequence is Orotidine 5'-phosphate decarboxylase (261 aa).

Residues Asp34, 56–58 (KTH), 88–97 (DRKFADIGNT), Tyr214, and Arg232 each bind substrate. Catalysis depends on Lys90, which acts as the Proton donor.

It belongs to the OMP decarboxylase family.

It carries out the reaction orotidine 5'-phosphate + H(+) = UMP + CO2. The protein operates within pyrimidine metabolism; UMP biosynthesis via de novo pathway; UMP from orotate: step 2/2. The protein is Orotidine 5'-phosphate decarboxylase (URA3) of Kodamaea ohmeri (Yeast).